Here is a 137-residue protein sequence, read N- to C-terminus: Small ribosomal subunit protein uS19 (137 aa).

The protein belongs to the universal ribosomal protein uS19 family.

Protein S19 forms a complex with S13 that binds strongly to the 16S ribosomal RNA. The protein is Small ribosomal subunit protein uS19 of Methanoculleus marisnigri (strain ATCC 35101 / DSM 1498 / JR1).